The chain runs to 305 residues: MQNLARDIDAILITGPTASGKSALGVKLAQRHGGVVINADSMQVYGTLKILTARPDESEMGGVEHFLYGHVPPDRAYSTGAWLREAEALVARLRIEGRMPVFVGGTGLYFKALTGGLSDMPEVPHAIRQRLRKRLMEEGAEALHYELSALDPETAQRVRSGDGQRIVRALEVMEATGRPIGFYQQSRGPVIIDATRARKIVVLPERPVLHSRINRRFEAMLGMGAVEEVRALLALDLPLEMPAMKAIGVQQIAAMLKGEMSEAQAIEAGAAQTRQYAKRQMTWFRNQLDETWQRIDAAEALGENH.

15 to 22 (GPTASGKS) lines the ATP pocket. 17–22 (TASGKS) is a substrate binding site. Interaction with substrate tRNA stretches follow at residues 40–43 (DSMQ) and 164–168 (QRIVR).

This sequence belongs to the IPP transferase family. As to quaternary structure, monomer. Mg(2+) serves as cofactor.

The enzyme catalyses adenosine(37) in tRNA + dimethylallyl diphosphate = N(6)-dimethylallyladenosine(37) in tRNA + diphosphate. In terms of biological role, catalyzes the transfer of a dimethylallyl group onto the adenine at position 37 in tRNAs that read codons beginning with uridine, leading to the formation of N6-(dimethylallyl)adenosine (i(6)A). The chain is tRNA dimethylallyltransferase from Sinorhizobium medicae (strain WSM419) (Ensifer medicae).